Reading from the N-terminus, the 347-residue chain is Selenide, water dikinase (347 aa).

The active site involves C17. ATP contacts are provided by residues K20 and T48–D50. Residue D51 coordinates Mg(2+). Residues D68, D91, and G139–S141 each bind ATP. D91 contacts Mg(2+). D227 lines the Mg(2+) pocket.

The protein belongs to the selenophosphate synthase 1 family. Class I subfamily. Homodimer. Requires Mg(2+) as cofactor.

It carries out the reaction hydrogenselenide + ATP + H2O = selenophosphate + AMP + phosphate + 2 H(+). Its function is as follows. Synthesizes selenophosphate from selenide and ATP. This Escherichia coli O139:H28 (strain E24377A / ETEC) protein is Selenide, water dikinase.